The chain runs to 63 residues: MYLSLLLILLAWTLWLGNSLAWLGVIIFILVINQFQIAREETYLESKFGDEYRRYKQKVRRWL.

Positions 1 to 21 (MYLSLLLILLAWTLWLGNSLA) are cleaved as a signal peptide.

This is an uncharacterized protein from Haemophilus influenzae (strain ATCC 51907 / DSM 11121 / KW20 / Rd).